The following is a 187-amino-acid chain: dTTP/UTP pyrophosphatase (187 aa).

Catalysis depends on Asp-65, which acts as the Proton acceptor.

Belongs to the Maf family. YhdE subfamily. A divalent metal cation serves as cofactor.

The protein resides in the cytoplasm. The catalysed reaction is dTTP + H2O = dTMP + diphosphate + H(+). The enzyme catalyses UTP + H2O = UMP + diphosphate + H(+). Nucleoside triphosphate pyrophosphatase that hydrolyzes dTTP and UTP. May have a dual role in cell division arrest and in preventing the incorporation of modified nucleotides into cellular nucleic acids. In Deinococcus geothermalis (strain DSM 11300 / CIP 105573 / AG-3a), this protein is dTTP/UTP pyrophosphatase.